The sequence spans 272 residues: Phosphoglycolate phosphatase (272 aa).

Asp-19 functions as the Nucleophile in the catalytic mechanism. Residues Asp-19, Asp-21, and Asp-182 each coordinate Mg(2+).

The protein belongs to the HAD-like hydrolase superfamily. CbbY/CbbZ/Gph/YieH family. It depends on Mg(2+) as a cofactor.

The catalysed reaction is 2-phosphoglycolate + H2O = glycolate + phosphate. It functions in the pathway organic acid metabolism; glycolate biosynthesis; glycolate from 2-phosphoglycolate: step 1/1. Functionally, specifically catalyzes the dephosphorylation of 2-phosphoglycolate. Is involved in the dissimilation of the intracellular 2-phosphoglycolate formed during the DNA repair of 3'-phosphoglycolate ends, a major class of DNA lesions induced by oxidative stress. The protein is Phosphoglycolate phosphatase of Pseudomonas syringae pv. tomato (strain ATCC BAA-871 / DC3000).